Here is a 218-residue protein sequence, read N- to C-terminus: Small ribosomal subunit protein uS3c (218 aa).

Residues 47 to 118 form the KH type-2 domain; the sequence is VQKHMRISSG…RLNITITRIA (72 aa).

Belongs to the universal ribosomal protein uS3 family. In terms of assembly, part of the 30S ribosomal subunit.

It localises to the plastid. Its subcellular location is the chloroplast. This Amborella trichopoda protein is Small ribosomal subunit protein uS3c (rps3).